Reading from the N-terminus, the 333-residue chain is Fructose-1,6-bisphosphatase class 1 (333 aa).

Mg(2+) is bound by residues E92, D113, L115, and D116. Residues 116 to 119, N209, Y242, and K272 each bind substrate; that span reads DGSS. E278 is a binding site for Mg(2+).

The protein belongs to the FBPase class 1 family. As to quaternary structure, homotetramer. It depends on Mg(2+) as a cofactor.

The protein resides in the cytoplasm. The catalysed reaction is beta-D-fructose 1,6-bisphosphate + H2O = beta-D-fructose 6-phosphate + phosphate. Its pathway is carbohydrate biosynthesis; Calvin cycle. The protein is Fructose-1,6-bisphosphatase class 1 of Chlorobaculum tepidum (strain ATCC 49652 / DSM 12025 / NBRC 103806 / TLS) (Chlorobium tepidum).